The chain runs to 97 residues: UPF0235 protein Daro_3887 (97 aa).

It belongs to the UPF0235 family.

The chain is UPF0235 protein Daro_3887 from Dechloromonas aromatica (strain RCB).